Consider the following 45-residue polypeptide: uncharacterized protein (45 aa).

This is an uncharacterized protein from Archaeoglobus fulgidus (strain ATCC 49558 / DSM 4304 / JCM 9628 / NBRC 100126 / VC-16).